The following is a 226-amino-acid chain: Cytidylate kinase (226 aa).

10 to 18 (GPASSGKST) contacts ATP.

Belongs to the cytidylate kinase family. Type 1 subfamily.

It is found in the cytoplasm. It carries out the reaction CMP + ATP = CDP + ADP. It catalyses the reaction dCMP + ATP = dCDP + ADP. This Streptococcus uberis (strain ATCC BAA-854 / 0140J) protein is Cytidylate kinase.